Consider the following 727-residue polypeptide: NHL repeat-containing protein 2 (727 aa).

In terms of domain architecture, Thioredoxin spans 43–198 (RERDLTVPEL…TLKFYKERGQ (156 aa)). NHL repeat units follow at residues 207–249 (KLYK…TLKN), 260–302 (NSGR…IDLE), 330–364 (ISSP…VWAL), 404–434 (FAQP…VRMI), 456–500 (AFGD…VDPK), and 513–557 (ASNV…LDLE).

Monomer.

The protein localises to the cytoplasm. It is found in the cytosol. Functionally, required for normal embryonic development. The chain is NHL repeat-containing protein 2 (NHLRC2) from Gallus gallus (Chicken).